The sequence spans 484 residues: MNICNKPSNKTAPEKSVWTAPSQDSGPSPELQGQRSRRNGWSWPPHPLQIVAWLLYLFFAVIGFGVLVPLLPHHWVPAGYACMGAIFAGHLVVHLTAVSIDPADANVRDKSYSGPLPIFNRSQHAHVIEDLHCNLCDVDVSARSKHCSACNKCVCGFDHHCKWLNNCVGERNYRLFLHSVASALLGVLLLVLVATYVFVEFFVNPMRLRTNQHFEVLKNHTDVWFVFLPAAPVETQAPAILALAALLILLGLLSTALLGHLLCFHIYLMWHKLTTYEYIVQHRPAQEAKETHKELESCPRKVRSIQEMEFYMRTFSHVRPEPSGQARTAALNANPSQFLATQGQVEPPLPSSSDTLALPPRIQPQKKRKRRVYRLPRSGVLDRELPLPRLRETGTPSRRSSSSSDSTSASPVHAGGSAGAYYSASAESMEEIPVAQTRLGSAALGAPGARGRESGLALQARSPAVFVSPSSGEPGTPGGGDGLP.

Composition is skewed to polar residues over residues 1–11 (MNICNKPSNKT) and 19–34 (TAPS…LQGQ). The disordered stretch occupies residues 1 to 38 (MNICNKPSNKTAPEKSVWTAPSQDSGPSPELQGQRSRR). Residues 1 to 49 (MNICNKPSNKTAPEKSVWTAPSQDSGPSPELQGQRSRRNGWSWPPHPLQ) are Cytoplasmic-facing. A mediates interaction with STING1 region spans residues 1-268 (MNICNKPSNK…GHLLCFHIYL (268 aa)). A helical membrane pass occupies residues 50 to 70 (IVAWLLYLFFAVIGFGVLVPL). The Lumenal portion of the chain corresponds to 71 to 74 (LPHH). Residues 75–95 (WVPAGYACMGAIFAGHLVVHL) form a helical membrane-spanning segment. Residues 96 to 182 (TAVSIDPADA…YRLFLHSVAS (87 aa)) lie on the Cytoplasmic side of the membrane. The region spanning 131–181 (LHCNLCDVDVSARSKHCSACNKCVCGFDHHCKWLNNCVGERNYRLFLHSVA) is the DHHC domain. Cys-161 functions as the S-palmitoyl cysteine intermediate in the catalytic mechanism. Residues 183-203 (ALLGVLLLVLVATYVFVEFFV) form a helical membrane-spanning segment. Residues 204–238 (NPMRLRTNQHFEVLKNHTDVWFVFLPAAPVETQAP) lie on the Lumenal side of the membrane. A helical membrane pass occupies residues 239 to 259 (AILALAALLILLGLLSTALLG). Over 260-484 (HLLCFHIYLM…GTPGGGDGLP (225 aa)) the chain is Cytoplasmic. 2 disordered regions span residues 341–415 (TQGQ…VHAG) and 444–484 (LGAP…DGLP). Residues 364–374 (PQKKRKRRVYR) are compositionally biased toward basic residues. Residues 380-392 (VLDRELPLPRLRE) show a composition bias toward basic and acidic residues. The segment covering 395-415 (TPSRRSSSSSDSTSASPVHAG) has biased composition (low complexity). Over residues 475-484 (GTPGGGDGLP) the composition is skewed to gly residues.

This sequence belongs to the DHHC palmitoyltransferase family. Interacts with STING1; ZDHHC1 constitutively interacts with STING1 and in presence of DNA viruses activates it by promoting its cGAMP-induced oligomerization and the recruitment of downstream signaling components. As to expression, expressed at high levels in fetal lung and heart. Expressed at lower levels in fetal liver and brain. Also detected in adult islet cells of pancreas, Leydig cells of testis, retina and molecular layer of cerebellum.

It is found in the endosome membrane. Its subcellular location is the endoplasmic reticulum membrane. The protein resides in the golgi apparatus. The catalysed reaction is L-cysteinyl-[protein] + hexadecanoyl-CoA = S-hexadecanoyl-L-cysteinyl-[protein] + CoA. In terms of biological role, palmitoyltransferase that catalyzes the addition of palmitate onto various protein substrates, such as NCDN and NLRP3. Has a palmitoyltransferase activity toward NCDN and regulates NCDN association with endosome membranes through this palmitoylation. Acts as an activator of the NLRP3 inflammasome by mediating palmitoylation of 'Cys-130' and 'Cys-958' of NLRP3, thereby promoting NLRP3 phosphorylation and activation by NEK7. Also has a palmitoyltransferase activity-independent function in DNA virus-triggered and CGAS-mediated innate immune response. Functions as an activator of STING1 by promoting its cGAMP-induced oligomerization and the recruitment of downstream signaling components. The chain is Palmitoyltransferase ZDHHC1 from Mus musculus (Mouse).